The chain runs to 435 residues: D-amino acid dehydrogenase (435 aa).

3–17 (VIVLGGGVLGVSTAW) is a binding site for FAD.

The protein belongs to the DadA oxidoreductase family. The cofactor is FAD.

The catalysed reaction is a D-alpha-amino acid + A + H2O = a 2-oxocarboxylate + AH2 + NH4(+). The protein operates within amino-acid degradation; D-alanine degradation; NH(3) and pyruvate from D-alanine: step 1/1. In terms of biological role, oxidative deamination of D-amino acids. The sequence is that of D-amino acid dehydrogenase from Chromobacterium violaceum (strain ATCC 12472 / DSM 30191 / JCM 1249 / CCUG 213 / NBRC 12614 / NCIMB 9131 / NCTC 9757 / MK).